Here is a 112-residue protein sequence, read N- to C-terminus: uncharacterized protein (112 aa).

2 consecutive transmembrane segments (helical) span residues 33–53 and 69–89; these read IIGI…MIIF and MNNI…HITV.

The protein localises to the membrane. This is an uncharacterized protein from Saccharomyces cerevisiae (strain ATCC 204508 / S288c) (Baker's yeast).